We begin with the raw amino-acid sequence, 87 residues long: Phosphoribosyl-ATP pyrophosphatase (87 aa).

The protein belongs to the PRA-PH family.

The protein localises to the cytoplasm. It carries out the reaction 1-(5-phospho-beta-D-ribosyl)-ATP + H2O = 1-(5-phospho-beta-D-ribosyl)-5'-AMP + diphosphate + H(+). It participates in amino-acid biosynthesis; L-histidine biosynthesis; L-histidine from 5-phospho-alpha-D-ribose 1-diphosphate: step 2/9. The chain is Phosphoribosyl-ATP pyrophosphatase from Kocuria rhizophila (strain ATCC 9341 / DSM 348 / NBRC 103217 / DC2201).